The primary structure comprises 159 residues: SsrA-binding protein (159 aa).

A disordered region spans residues 134–159 (KLHDKRETSKERDWNRQKNRLLKERG). The segment covering 137–159 (DKRETSKERDWNRQKNRLLKERG) has biased composition (basic and acidic residues).

The protein belongs to the SmpB family.

The protein localises to the cytoplasm. In terms of biological role, required for rescue of stalled ribosomes mediated by trans-translation. Binds to transfer-messenger RNA (tmRNA), required for stable association of tmRNA with ribosomes. tmRNA and SmpB together mimic tRNA shape, replacing the anticodon stem-loop with SmpB. tmRNA is encoded by the ssrA gene; the 2 termini fold to resemble tRNA(Ala) and it encodes a 'tag peptide', a short internal open reading frame. During trans-translation Ala-aminoacylated tmRNA acts like a tRNA, entering the A-site of stalled ribosomes, displacing the stalled mRNA. The ribosome then switches to translate the ORF on the tmRNA; the nascent peptide is terminated with the 'tag peptide' encoded by the tmRNA and targeted for degradation. The ribosome is freed to recommence translation, which seems to be the essential function of trans-translation. In Sinorhizobium fredii (strain NBRC 101917 / NGR234), this protein is SsrA-binding protein.